We begin with the raw amino-acid sequence, 149 residues long: Calmodulin, striated muscle (149 aa).

4 EF-hand domains span residues 8 to 43, 44 to 79, 81 to 116, and 117 to 149; these read EQIAEFKEAFSLFDRDGDGCITTMELGTVMRSLGQN, PTEAELQDMVGEVDADGSGTIDFPEFLSLMARKMRD, DSEEEIREAFRVFDKDGNGYISAAELRHVMTNLGEK, and LTDEEVDEMIKEADCNNDGQVNYEEFVRMMTEK. 15 residues coordinate Ca(2+): aspartate 21, aspartate 23, aspartate 25, cysteine 27, glutamate 32, aspartate 57, aspartate 59, serine 61, threonine 63, glutamate 68, aspartate 94, aspartate 96, asparagine 98, tyrosine 100, and glutamate 105. Lysine 116 carries the N6,N6,N6-trimethyllysine modification. Positions 130, 132, 134, 136, and 141 each coordinate Ca(2+).

It belongs to the calmodulin family.

The sequence is that of Calmodulin, striated muscle (CCM1) from Gallus gallus (Chicken).